Here is a 611-residue protein sequence, read N- to C-terminus: Solute carrier family 23 member 3 (611 aa).

Residues 1-52 are Cytoplasmic-facing; that stretch reads MSRSPLHPIPLLSEGYQDTPAPLPPLLPPLQNPSSRSWASRVFGPSTWGLSC. A helical membrane pass occupies residues 53–73; that stretch reads LLALQHFLVLASLLWASHLLL. Residues 74 to 88 are Extracellular-facing; sequence LHGLPPGGLSYPPAQ. A helical membrane pass occupies residues 89 to 109; the sequence is LLASSFFSCGLSTVLQTWMGS. Topologically, residues 110-168 are cytoplasmic; the sequence is RLPLIQAPSLEFLIPALVLTNQKLPLTTKTPGNASLSLPLCSLTRSCHGLELWNTSLRE. The chain crosses the membrane as a helical span at residues 169 to 189; that stretch reads VSGAVVVSGLLQGTIGLLGVP. The Extracellular portion of the chain corresponds to 190 to 191; the sequence is GR. Residues 192–212 form a helical membrane-spanning segment; that stretch reads VFPYCGPLVLAPSLVVAGLSA. Over 213–215 the chain is Cytoplasmic; it reads HKE. A helical transmembrane segment spans residues 216–236; it reads VAQFCSAHWGLALLLILLMVV. Residues 237–269 are Extracellular-facing; the sequence is CSQHLGSCQIPLCSWRPSSTSTHICIPVFRLLS. Residues 270–290 traverse the membrane as a helical segment; sequence VLAPVACVWFISAFVGTSVIP. Residues 291-319 are Cytoplasmic-facing; sequence LQLSEPSDAPWFWLPHPGEWEWPLLTPRA. Residues 320–340 traverse the membrane as a helical segment; the sequence is LAAGISMALAASTSSLGCYAL. The Extracellular portion of the chain corresponds to 341–358; it reads CGQLLRLSPPPPHACSRG. Residues 359–379 form a helical membrane-spanning segment; that stretch reads LSLEGLGSVLAGLLGSPLGTA. The Cytoplasmic segment spans residues 380-397; sequence SSFPNVGTVSLFQTGSRR. The chain crosses the membrane as a helical span at residues 398-417; the sequence is VAHLVGLFCMGLGLSPRLAQ. Over 418-426 the chain is Extracellular; it reads LFTSIPLPV. The chain crosses the membrane as a helical span at residues 427–449; that stretch reads LGGVLGVTQAVVLSAGFSSFHLA. Residues 450–455 are Cytoplasmic-facing; sequence DIDSGR. A helical transmembrane segment spans residues 456 to 475; that stretch reads NVFIVGFSIFMALLLPRWLR. The Extracellular segment spans residues 476-489; it reads EAPVLLNTGWSPLD. Residues 490–510 traverse the membrane as a helical segment; the sequence is MFLRSLLAEPIFLAGLLGFLL. Topologically, residues 511 to 611 are cytoplasmic; the sequence is ENTISGTRAE…TASREGVRSQ (101 aa). Residues 574-611 form a disordered region; the sequence is PEDSGDEGGSSKTGERADLLPNSGESYSTASREGVRSQ. The span at 596-605 shows a compositional bias: polar residues; it reads SGESYSTASR.

The protein belongs to the nucleobase:cation symporter-2 (NCS2) (TC 2.A.40) family.

The protein resides in the membrane. The protein localises to the cytoplasm. The enzyme catalyses hypoxanthine(out) + Na(+)(out) = hypoxanthine(in) + Na(+)(in). Functionally, acts as a sodium-dependent hypoxanthine transporter. May show xanthine-hypoxanthine exchange activity. The protein is Solute carrier family 23 member 3 (Slc23a3) of Mus musculus (Mouse).